We begin with the raw amino-acid sequence, 354 residues long: UDP-N-acetylglucosamine--N-acetylmuramyl-(pentapeptide) pyrophosphoryl-undecaprenol N-acetylglucosamine transferase (354 aa).

Residues 15–17, Asn127, Arg163, Ser191, Ile244, 263–268, and Gln288 each bind UDP-N-acetyl-alpha-D-glucosamine; these read TGG and ALTVSE.

This sequence belongs to the glycosyltransferase 28 family. MurG subfamily.

The protein resides in the cell inner membrane. The enzyme catalyses di-trans,octa-cis-undecaprenyl diphospho-N-acetyl-alpha-D-muramoyl-L-alanyl-D-glutamyl-meso-2,6-diaminopimeloyl-D-alanyl-D-alanine + UDP-N-acetyl-alpha-D-glucosamine = di-trans,octa-cis-undecaprenyl diphospho-[N-acetyl-alpha-D-glucosaminyl-(1-&gt;4)]-N-acetyl-alpha-D-muramoyl-L-alanyl-D-glutamyl-meso-2,6-diaminopimeloyl-D-alanyl-D-alanine + UDP + H(+). Its pathway is cell wall biogenesis; peptidoglycan biosynthesis. In terms of biological role, cell wall formation. Catalyzes the transfer of a GlcNAc subunit on undecaprenyl-pyrophosphoryl-MurNAc-pentapeptide (lipid intermediate I) to form undecaprenyl-pyrophosphoryl-MurNAc-(pentapeptide)GlcNAc (lipid intermediate II). In Aliivibrio fischeri (strain MJ11) (Vibrio fischeri), this protein is UDP-N-acetylglucosamine--N-acetylmuramyl-(pentapeptide) pyrophosphoryl-undecaprenol N-acetylglucosamine transferase.